Reading from the N-terminus, the 412-residue chain is Vacuolar calcium ion transporter (412 aa).

The Cytoplasmic portion of the chain corresponds to 1-55; the sequence is MIERLKIAKNRLEAMNSFNFPAQDRHERAPLLGSEYDHSMARQLSLLNVVGMTKS. The chain crosses the membrane as a helical span at residues 56–76; it reads VLMSSYFNLMLVFVPIGLIAG. Residues 77–83 lie on the Lumenal side of the membrane; that stretch reads WFEWNAK. A helical membrane pass occupies residues 84-104; that stretch reads SVFILNMLAIIPLASLLSFAT. At 105–114 the chain is on the cytoplasmic side; that stretch reads EQLSIISGPT. A helical membrane pass occupies residues 115 to 135; sequence LGALLNASFGNAIELIVGVLA. The Lumenal segment spans residues 136 to 148; sequence LKRGELRIVQSSL. The helical transmembrane segment at 149-169 threads the bilayer; the sequence is LGSILSNLLLVFGMCLVTTGI. The Cytoplasmic segment spans residues 170 to 177; the sequence is RREITTFN. The helical transmembrane segment at 178-198 threads the bilayer; that stretch reads ITVAQTMIAMLALSTATILIP. Over 199–215 the chain is Lumenal; it reads ATFHYSLPDNANSENAL. A helical membrane pass occupies residues 216-236; sequence LHVSRGTAVIVLIVYVLLLVF. Topologically, residues 237–264 are cytoplasmic; sequence QLKTHKHVCHDPSEVEEETEPRILGLRS. The chain crosses the membrane as a helical span at residues 265-285; sequence SIAMLAIVTVFVSLCADYLVG. The Lumenal segment spans residues 286–299; that stretch reads SIDQLVEEVNISKT. Residues 300–320 traverse the membrane as a helical segment; sequence FVGLVILPVVGNAAEHVTAIV. At 321-334 the chain is on the cytoplasmic side; it reads VSYRGQMDLALGVA. Residues 335-355 traverse the membrane as a helical segment; that stretch reads IGSSIQIALFLAPFLVIVGWI. Residues 356–358 are Lumenal-facing; it reads ISQ. A helical membrane pass occupies residues 359 to 379; that stretch reads PLTLYFESLETVILFVSVFLV. Residues 380-389 are Cytoplasmic-facing; the sequence is NYLIQDGATH. A helical transmembrane segment spans residues 390-410; sequence WLEGVQLLALYAIVVLAFFYY. The Lumenal segment spans residues 411–412; that stretch reads PQ.

It belongs to the Ca(2+):cation antiporter (CaCA) (TC 2.A.19) family.

It localises to the vacuole membrane. It is found in the endoplasmic reticulum membrane. In terms of biological role, has a role in promoting intracellular calcium ion sequestration via the exchange of calcium ions for hydrogen ions across the vacuolar membrane. Involved also in manganese ion homeostasis via its uptake into the vacuole. In Schizosaccharomyces pombe (strain 972 / ATCC 24843) (Fission yeast), this protein is Vacuolar calcium ion transporter (vcx1).